The chain runs to 424 residues: Appressorium protein ROW1 (424 aa).

Positions 1 to 21 are cleaved as a signal peptide; that stretch reads MTKLTLTVALVSALLASGASA. Disordered regions lie at residues 19–54, 69–90, 278–304, and 327–398; these read ASAQ…WQPK, ANRI…GYNT, SGST…CSSV, and SSSA…TQGA. At 22–403 the chain is on the extracellular side; sequence QQPTGTGNGP…NTQGAASSAS (382 aa). Over residues 37–54 the composition is skewed to polar residues; that stretch reads TDLNRNQPTKSWTQWQPK. Low complexity-rich tracts occupy residues 295-304 and 327-347; these read APSSSQCSSV and SSSA…SASS. Over residues 362 to 382 the composition is skewed to gly residues; that stretch reads SGTGSGSGSGSGSGSGSGSGS. A compositionally biased stretch (low complexity) spans 383-398; that stretch reads SSGSSSSGSSSNTQGA. A helical membrane pass occupies residues 404-424; it reads SLTISVGLAGLVAIGAAAFAL.

Its subcellular location is the cell membrane. It localises to the secreted. In terms of biological role, plays a role in the formation of the appressorium, a specialized infection structure with the purpose of penetrating the host surface, and is required for proper remodeling of the appressorium wall and vesicle secretion. The polypeptide is Appressorium protein ROW1 (Mycosarcoma maydis (Corn smut fungus)).